The following is an 847-amino-acid chain: Leucine--tRNA ligase (847 aa).

A 'HIGH' region motif is present at residues 41 to 51; that stretch reads PYPSGRIHMGH. The 'KMSKS' region signature appears at 619–623; that stretch reads KMSKS. Residue Lys-622 coordinates ATP.

This sequence belongs to the class-I aminoacyl-tRNA synthetase family.

It localises to the cytoplasm. It carries out the reaction tRNA(Leu) + L-leucine + ATP = L-leucyl-tRNA(Leu) + AMP + diphosphate. This chain is Leucine--tRNA ligase, found in Cereibacter sphaeroides (strain ATCC 17023 / DSM 158 / JCM 6121 / CCUG 31486 / LMG 2827 / NBRC 12203 / NCIMB 8253 / ATH 2.4.1.) (Rhodobacter sphaeroides).